The following is a 282-amino-acid chain: Phosphatidylserine decarboxylase proenzyme (282 aa).

Residues Asp85, His142, and Ser244 each act as charge relay system; for autoendoproteolytic cleavage activity in the active site. Catalysis depends on Ser244, which acts as the Schiff-base intermediate with substrate; via pyruvic acid; for decarboxylase activity. Ser244 carries the post-translational modification Pyruvic acid (Ser); by autocatalysis.

Belongs to the phosphatidylserine decarboxylase family. PSD-B subfamily. Prokaryotic type I sub-subfamily. Heterodimer of a large membrane-associated beta subunit and a small pyruvoyl-containing alpha subunit. The cofactor is pyruvate. Is synthesized initially as an inactive proenzyme. Formation of the active enzyme involves a self-maturation process in which the active site pyruvoyl group is generated from an internal serine residue via an autocatalytic post-translational modification. Two non-identical subunits are generated from the proenzyme in this reaction, and the pyruvate is formed at the N-terminus of the alpha chain, which is derived from the carboxyl end of the proenzyme. The autoendoproteolytic cleavage occurs by a canonical serine protease mechanism, in which the side chain hydroxyl group of the serine supplies its oxygen atom to form the C-terminus of the beta chain, while the remainder of the serine residue undergoes an oxidative deamination to produce ammonia and the pyruvoyl prosthetic group on the alpha chain. During this reaction, the Ser that is part of the protease active site of the proenzyme becomes the pyruvoyl prosthetic group, which constitutes an essential element of the active site of the mature decarboxylase.

The protein localises to the cell membrane. It catalyses the reaction a 1,2-diacyl-sn-glycero-3-phospho-L-serine + H(+) = a 1,2-diacyl-sn-glycero-3-phosphoethanolamine + CO2. The protein operates within phospholipid metabolism; phosphatidylethanolamine biosynthesis; phosphatidylethanolamine from CDP-diacylglycerol: step 2/2. Its function is as follows. Catalyzes the formation of phosphatidylethanolamine (PtdEtn) from phosphatidylserine (PtdSer). This Coxiella burnetii (strain Dugway 5J108-111) protein is Phosphatidylserine decarboxylase proenzyme.